A 205-amino-acid chain; its full sequence is GTP cyclohydrolase-2 (205 aa).

Position 49–53 (49–53 (RIHSE)) interacts with GTP. Cys54, Cys65, and Cys67 together coordinate Zn(2+). Residues Gln70, 92–94 (EGR), and Thr114 contribute to the GTP site. Asp126 (proton acceptor) is an active-site residue. Catalysis depends on Arg128, which acts as the Nucleophile. GTP-binding residues include Thr149 and Lys154.

This sequence belongs to the GTP cyclohydrolase II family. The cofactor is Zn(2+).

It carries out the reaction GTP + 4 H2O = 2,5-diamino-6-hydroxy-4-(5-phosphoribosylamino)-pyrimidine + formate + 2 phosphate + 3 H(+). It participates in cofactor biosynthesis; riboflavin biosynthesis; 5-amino-6-(D-ribitylamino)uracil from GTP: step 1/4. In terms of biological role, catalyzes the conversion of GTP to 2,5-diamino-6-ribosylamino-4(3H)-pyrimidinone 5'-phosphate (DARP), formate and pyrophosphate. The polypeptide is GTP cyclohydrolase-2 (Shewanella sediminis (strain HAW-EB3)).